We begin with the raw amino-acid sequence, 326 residues long: Pyruvate dehydrogenase E1 component subunit beta (326 aa).

Glu62 contributes to the thiamine diphosphate binding site.

As to quaternary structure, heterodimer of an alpha and a beta chain. It depends on thiamine diphosphate as a cofactor.

The enzyme catalyses N(6)-[(R)-lipoyl]-L-lysyl-[protein] + pyruvate + H(+) = N(6)-[(R)-S(8)-acetyldihydrolipoyl]-L-lysyl-[protein] + CO2. In terms of biological role, the pyruvate dehydrogenase complex catalyzes the overall conversion of pyruvate to acetyl-CoA and CO(2). It contains multiple copies of three enzymatic components: pyruvate dehydrogenase (E1), dihydrolipoamide acetyltransferase (E2) and lipoamide dehydrogenase (E3). This is Pyruvate dehydrogenase E1 component subunit beta (pdhB) from Mycoplasma genitalium (strain ATCC 33530 / DSM 19775 / NCTC 10195 / G37) (Mycoplasmoides genitalium).